The primary structure comprises 761 residues: Translation initiation factor IF-2 (761 aa).

Residues 39–179 (DEETLNKAKQ…KVNHQQMPLP (141 aa)) form a disordered region. Low complexity predominate over residues 45–105 (KAKQAGKPAA…NNQQSQSQGQ (61 aa)). The span at 106 to 120 (TKRPSQASNNQSGAA) shows a compositional bias: polar residues. Residues 142–154 (PGSNNRRPGNNQN) are compositionally biased toward low complexity. Basic residues predominate over residues 155–168 (RRNHGNRGGKRRPQ). Positions 262–435 (ERPPVVTIMG…EVEEFKANPD (174 aa)) constitute a tr-type G domain. The tract at residues 271–278 (GHVDHGKT) is G1. 271-278 (GHVDHGKT) serves as a coordination point for GTP. Positions 296 to 300 (GITQH) are G2. Residues 317-320 (DTPG) are G3. Residues 317–321 (DTPGH) and 371–374 (NKID) contribute to the GTP site. The tract at residues 371 to 374 (NKID) is G4. Residues 407-409 (SAL) form a G5 region.

This sequence belongs to the TRAFAC class translation factor GTPase superfamily. Classic translation factor GTPase family. IF-2 subfamily.

The protein localises to the cytoplasm. Its function is as follows. One of the essential components for the initiation of protein synthesis. Protects formylmethionyl-tRNA from spontaneous hydrolysis and promotes its binding to the 30S ribosomal subunits. Also involved in the hydrolysis of GTP during the formation of the 70S ribosomal complex. This is Translation initiation factor IF-2 from Shouchella clausii (strain KSM-K16) (Alkalihalobacillus clausii).